The following is a 152-amino-acid chain: Transcriptional regulator MraZ (152 aa).

SpoVT-AbrB domains follow at residues 5–52 (ASSL…PLAQ) and 81–124 (ATEY…DEAR).

Belongs to the MraZ family. In terms of assembly, forms oligomers.

It is found in the cytoplasm. It localises to the nucleoid. This chain is Transcriptional regulator MraZ, found in Pseudoalteromonas translucida (strain TAC 125).